Reading from the N-terminus, the 302-residue chain is Putative thiol protease R355 (302 aa).

Catalysis depends on residues H182 and D199. C244 functions as the Nucleophile in the catalytic mechanism.

Belongs to the peptidase C48 family.

Its subcellular location is the virion. The polypeptide is Putative thiol protease R355 (Acanthamoeba polyphaga mimivirus (APMV)).